Consider the following 218-residue polypeptide: Large ribosomal subunit protein uL3 (218 aa).

Positions 126-163 (HGFSRGPMTHGSKNHRQPGSIGAGTTPGRIYPGKRMSG) are disordered.

Belongs to the universal ribosomal protein uL3 family. As to quaternary structure, part of the 50S ribosomal subunit. Forms a cluster with proteins L14 and L19.

In terms of biological role, one of the primary rRNA binding proteins, it binds directly near the 3'-end of the 23S rRNA, where it nucleates assembly of the 50S subunit. The polypeptide is Large ribosomal subunit protein uL3 (Synechococcus sp. (strain CC9311)).